The chain runs to 248 residues: PACRG-like protein (248 aa).

Position 1 is an N-acetylmethionine (M1). The disordered stretch occupies residues M1 to E72. 2 stretches are compositionally biased toward polar residues: residues N14–Q29 and V36–T45. A Phosphoserine modification is found at S47.

The sequence is that of PACRG-like protein (Pacrgl) from Mus musculus (Mouse).